A 365-amino-acid chain; its full sequence is Chorismate synthase (365 aa).

R46 provides a ligand contact to NADP(+). Residues 124–126, G284, 299–303, and R326 each bind FMN; these read RAS and KPTPS.

Belongs to the chorismate synthase family. Requires FMNH2 as cofactor.

It carries out the reaction 5-O-(1-carboxyvinyl)-3-phosphoshikimate = chorismate + phosphate. Its pathway is metabolic intermediate biosynthesis; chorismate biosynthesis; chorismate from D-erythrose 4-phosphate and phosphoenolpyruvate: step 7/7. Functionally, catalyzes the anti-1,4-elimination of the C-3 phosphate and the C-6 proR hydrogen from 5-enolpyruvylshikimate-3-phosphate (EPSP) to yield chorismate, which is the branch point compound that serves as the starting substrate for the three terminal pathways of aromatic amino acid biosynthesis. This reaction introduces a second double bond into the aromatic ring system. In Pyrobaculum islandicum (strain DSM 4184 / JCM 9189 / GEO3), this protein is Chorismate synthase.